A 345-amino-acid polypeptide reads, in one-letter code: Isocitrate/homoisocitrate dehydrogenase (345 aa).

Residue 69–71 participates in NADH binding; that stretch reads TTT. 6 residues coordinate (2R,3S)-homoisocitrate: Arg86, Arg96, Arg111, Tyr118, Lys163, and Asn165. Position 165 (Asn165) interacts with NADH. Residues Asp194, Asp218, and Asp222 each contribute to the Mg(2+) site. Residues 251–255 and Asn263 contribute to the NADH site; that span reads GSAPD.

It belongs to the isocitrate and isopropylmalate dehydrogenases family. Mn(2+) serves as cofactor. Mg(2+) is required as a cofactor.

The catalysed reaction is D-threo-isocitrate + NAD(+) = 2-oxoglutarate + CO2 + NADH. It catalyses the reaction (2R,3S)-homoisocitrate + NAD(+) = 2-oxoadipate + CO2 + NADH. It functions in the pathway amino-acid biosynthesis; L-lysine biosynthesis via AAA pathway; L-alpha-aminoadipate from 2-oxoglutarate: step 4/5. Catalyzes the NAD(+)-dependent oxidative decarboxylation of homoisocitrate to 2-oxoadipate (alpha-ketoadipate), and of isocitrate to 2-oxoglutarate, at near equal efficiency. May thus play a dual role in glutamate and lysine biosynthesis in vivo. Preferentially uses NAD over NADP. This Pyrococcus horikoshii (strain ATCC 700860 / DSM 12428 / JCM 9974 / NBRC 100139 / OT-3) protein is Isocitrate/homoisocitrate dehydrogenase.